A 691-amino-acid chain; its full sequence is MPRDFPLDRVRNIGIAAHIDAGKTTTTERILFYSGVVHKIGEVHDGAAVTDWMAQERERGITITAAAISTAWNDHRINIIDTPGHVDFTIEVERSMRVLDGVIAVFCAVGGVQPQSETVWRQADRYSVPRMVFVNKMDRTGADFLKVYGQIVDRLKAKAAPIQLPIGAEGDLSGIIDLVANKAYIYKNDLGTDIEEAEIPADMADEAAEWRAKLMESVAENDEELIEKFLETGELTEAELKKGIRDGVLKHGLVPMLCGSAFKNKGVQLVLDAVVDYLPAPIDVPPIQGVLADGSEAVRPSDDNAPFSALAFKVMADPYGKLTFVRMYSGVLSKGSYVMNSTKDVKERISRLVVLKADDREEVDQLRAGDLGAVLGLKNTTTGDTLCDPDNSIVLETLFIPEPVISVAVEPKTKGDMEKLSKALTSLSEEDPTFRVSTDEETGQTVIAGMGELHLEILVDRMLREFKVEANIGAPQVSYRETIRSSSKGEGKFARQTGGKGQYGHVVIEMEPGEPGTGFEFINKIVGGAVPKEFIKPAEMGMKETCESGVIAGFPLIDVKCTMVDGSYHDVDSSEMAFKIAGSMAFKDGVKKCNPVLLEPMMKVEVEVPEDFLGSIIGDLSSRRGQVEGQSIDDGISKVSAKVPLAEMFGYATQLRSMTQGRGIFSMEFSRYEEVPRNVAEAIISKNQGNS.

Positions 8 to 282 (DRVRNIGIAA…AVVDYLPAPI (275 aa)) constitute a tr-type G domain. GTP is bound by residues 17-24 (AHIDAGKT), 81-85 (DTPGH), and 135-138 (NKMD).

This sequence belongs to the TRAFAC class translation factor GTPase superfamily. Classic translation factor GTPase family. EF-G/EF-2 subfamily.

It localises to the cytoplasm. Its function is as follows. Catalyzes the GTP-dependent ribosomal translocation step during translation elongation. During this step, the ribosome changes from the pre-translocational (PRE) to the post-translocational (POST) state as the newly formed A-site-bound peptidyl-tRNA and P-site-bound deacylated tRNA move to the P and E sites, respectively. Catalyzes the coordinated movement of the two tRNA molecules, the mRNA and conformational changes in the ribosome. The sequence is that of Elongation factor G from Synechococcus sp. (strain RCC307).